A 618-amino-acid polypeptide reads, in one-letter code: Mitochondrial Rho GTPase 1 (618 aa).

Residues 1-592 lie on the Cytoplasmic side of the membrane; sequence MKKDVRILLV…TQADLKSSTF (592 aa). In terms of domain architecture, Miro 1 spans 2-168; sequence KKDVRILLVG…FYYAQKAVLH (167 aa). Residues arginine 14, glycine 16, lysine 17, threonine 18, and serine 19 each contribute to the GTP site. Residue threonine 18 coordinates Mg(2+). 2 residues coordinate Mg(2+): proline 35 and aspartate 57. Residue serine 59 participates in GTP binding. An N6-acetyllysine modification is found at lysine 92. Residues asparagine 118, lysine 119, aspartate 121, alanine 149, and lysine 150 each coordinate GTP. Residue lysine 153 forms a Glycyl lysine isopeptide (Lys-Gly) (interchain with G-Cter in ubiquitin) linkage. The 36-residue stretch at 184 to 219 folds into the EF-hand 1 domain; it reads ACIKALTRIFKISDQDNDGTLNDAELNFFQRICFNT. Residues aspartate 197, aspartate 199, aspartate 201, threonine 203, and glutamate 208 each contribute to the Ca(2+) site. Residue lysine 235 forms a Glycyl lysine isopeptide (Lys-Gly) (interchain with G-Cter in ubiquitin) linkage. The region spanning 304–339 is the EF-hand 2 domain; that stretch reads HAYLFLQSTFDKHDLDRDCALSPDELKDLFKVFPYI. Aspartate 317, aspartate 319, aspartate 321, alanine 323, and glutamate 328 together coordinate Ca(2+). The 164-residue stretch at 416–579 folds into the Miro 2 domain; it reads RNVFRCNVIG…FVKLTTMAMY (164 aa). GTP is bound by residues asparagine 428, cysteine 429, glycine 430, lysine 431, serine 432, glycine 433, and lysine 447. Asparagine 428 provides a ligand contact to Mg(2+). Positions 428, 429, 430, 431, 432, 433, 447, 454, 477, 478, 528, 530, 558, 559, and 560 each coordinate GDP. Lysine 528, aspartate 530, threonine 558, and cysteine 559 together coordinate GTP. Residue lysine 572 forms a Glycyl lysine isopeptide (Lys-Gly) (interchain with G-Cter in ubiquitin) linkage. A helical; Anchor for type IV membrane protein transmembrane segment spans residues 593-615; the sequence is WLRASFGATVFAVLGFAMYKALL. The Mitochondrial intermembrane portion of the chain corresponds to 616 to 618; it reads KQR.

The protein belongs to the mitochondrial Rho GTPase family. In terms of assembly, homodimer. Interacts with the kinesin-binding proteins TRAK1/OIP106 and TRAK2/GRIF1, forming a link between mitochondria and the trafficking apparatus of the microtubules. Interacts with RAP1GDS1. Interacts with ARMCX1. Found in a complex with KIF5B, OGT, RHOT2 and TRAK1. In terms of processing, ubiquitinated by PRKN during mitophagy, leading to its degradation and enhancement of mitophagy. Deubiquitinated by USP30. Acetylation on Lys-92 decreases sensitivity of mitochondrial transport to elevated Ca(2+) levels, increases mitochondrial transport and promotes axon growth. Deacetylated by HDAC6 which blocks mitochondrial transport and mediates axon growth inhibition. Ubiquitously expressed. Expressed at high level in heart and skeletal muscle.

The protein resides in the mitochondrion outer membrane. The catalysed reaction is GTP + H2O = GDP + phosphate + H(+). It catalyses the reaction ATP + H2O = ADP + phosphate + H(+). The enzyme catalyses UTP + H2O = UDP + phosphate + H(+). In terms of biological role, atypical mitochondrial nucleoside-triphosphatase (NTPase) involved in mitochondrial trafficking. Probably involved in control of anterograde transport of mitochondria and their subcellular distribution. Promotes mitochondrial fission during high calcium conditions. Can hydrolyze GTP, ATP and UTP. The sequence is that of Mitochondrial Rho GTPase 1 (RHOT1) from Homo sapiens (Human).